A 404-amino-acid chain; its full sequence is E3 ubiquitin-protein ligase RNF128 (404 aa).

A signal peptide spans 1–31 (MGALKMRCQCFPLPYLSLLALLLLNLSLTRA). The 105-residue stretch at 62 to 166 (DSPIERAAGL…LKGNEIVDLI (105 aa)) folds into the PA domain. Residues 191 to 211 (IFFVSVSFFIVTAATVGYFIF) form a helical membrane-spanning segment. Residues 260 to 301 (CAVCIEPYKPSDVVRILTCNHFFHKNCIDPWLLEHRTCPMCK) form an RING-type; atypical zinc finger. The interval 336–356 (ITEEENHSETASSGYASVRGG) is disordered.

In terms of processing, auto-ubiquitinated. As to expression, expressed in the cement gland, cranial placodes, and the pronephros.

The protein resides in the endomembrane system. Its subcellular location is the cytoplasm. The protein localises to the perinuclear region. It carries out the reaction S-ubiquitinyl-[E2 ubiquitin-conjugating enzyme]-L-cysteine + [acceptor protein]-L-lysine = [E2 ubiquitin-conjugating enzyme]-L-cysteine + N(6)-ubiquitinyl-[acceptor protein]-L-lysine.. The protein operates within protein modification; protein ubiquitination. Functionally, E3 ubiquitin-protein ligase that catalyzes polyubiquitin chains. Converts epidermis into cement gland and neural tissue in whole embryos. The chain is E3 ubiquitin-protein ligase RNF128 (rnf128) from Xenopus laevis (African clawed frog).